The sequence spans 404 residues: O-antigen ligase (404 aa).

The next 11 membrane-spanning stretches (helical) occupy residues 16–32 (IWNK…YFLD), 39–55 (HLII…QVSR), 67–84 (SVFY…YSIL), 96–115 (FENT…PVLL), 127–147 (VLFS…ILYI), 168–183 (SMVF…WLFR), 189–221 (LVFL…GVLW), 228–246 (WKLI…ALVI), 324–343 (ILYI…VYLY), 363–379 (YNAH…FYIV), and 385–401 (QVDI…LLAL).

It belongs to the O-antigen ligase family.

Its subcellular location is the cell inner membrane. The enzyme catalyses a lipid-linked O antigen + a lipid A-core oligosaccharide = a lipopolysaccharide + a polyisoprenyl diphosphate.. It participates in bacterial outer membrane biogenesis; lipopolysaccharide biosynthesis. In terms of biological role, transferase involved in the biosynthesis of the lipopolysaccharide (LPS). Catalyzes the transfer of a polymerized O-antigen molecule from its polyprenyl diphosphate membrane anchor to a terminal sugar of the lipid A-core oligosaccharide, finalizing the biosynthesis of the lipopolysaccharide. May also be involved in a feedback mechanism to regulate O-unit synthesis, based on the availability of O units on the periplasmic face of the membrane. The polypeptide is O-antigen ligase (Salmonella typhimurium (strain LT2 / SGSC1412 / ATCC 700720)).